We begin with the raw amino-acid sequence, 312 residues long: uncharacterized protein (312 aa).

Disordered regions lie at residues 1 to 26 (MQKD…AMVA) and 45 to 106 (GNLQ…LPSG). Over residues 8 to 17 (RFQRNKKKIN) the composition is skewed to basic residues. A compositionally biased stretch (basic and acidic residues) spans 68-77 (NGKRNGDKVR). The span at 85-103 (GHSSYAGSRISGGNSNSHL) shows a compositional bias: polar residues.

This is an uncharacterized protein from Schizosaccharomyces pombe (strain 972 / ATCC 24843) (Fission yeast).